The sequence spans 501 residues: Pentatricopeptide repeat-containing protein At4g14190, chloroplastic (501 aa).

Residues 1 to 88 (MENLTTAQFL…SGSCPLRLLQ (88 aa)) constitute a chloroplast transit peptide. PPR repeat units lie at residues 130–160 (SENNYERIIRFLCEEKSMSEAIRAFRSMIDD), 166–200 (SLEIYNSIIHSYADDGKFEEAMFYLNHMKENGLLP), 201–235 (ITETYDGLIEAYGKWKMYDEIVLCLKRMESDGCVR), 236–270 (DHVTYNLLIREFSRGGLLKRMEQMYQSLMSRKMTL), and 271–305 (EPSTLLSMLEAYAEFGLIEKMEETCNKIIRFGISL).

This sequence belongs to the PPR family. P subfamily.

The protein localises to the plastid. Its subcellular location is the chloroplast. This is Pentatricopeptide repeat-containing protein At4g14190, chloroplastic from Arabidopsis thaliana (Mouse-ear cress).